The following is a 98-amino-acid chain: Small ribosomal subunit protein bS6 (98 aa).

The protein belongs to the bacterial ribosomal protein bS6 family.

Its function is as follows. Binds together with bS18 to 16S ribosomal RNA. This Staphylococcus epidermidis (strain ATCC 35984 / DSM 28319 / BCRC 17069 / CCUG 31568 / BM 3577 / RP62A) protein is Small ribosomal subunit protein bS6.